A 336-amino-acid polypeptide reads, in one-letter code: 4-hydroxy-2-oxovalerate aldolase (336 aa).

The region spanning 5–255 is the Pyruvate carboxyltransferase domain; that stretch reads IRIIDSTLRD…ETGVDLYKIM (251 aa). 13 to 14 is a binding site for substrate; sequence RD. A Mn(2+)-binding site is contributed by Asp-14. His-17 (proton acceptor) is an active-site residue. Residues Ser-167 and His-194 each coordinate substrate. Residues His-194 and His-196 each coordinate Mn(2+). Tyr-285 provides a ligand contact to substrate.

Belongs to the 4-hydroxy-2-oxovalerate aldolase family.

The catalysed reaction is (S)-4-hydroxy-2-oxopentanoate = acetaldehyde + pyruvate. This chain is 4-hydroxy-2-oxovalerate aldolase (mhpE), found in Carboxydothermus hydrogenoformans (strain ATCC BAA-161 / DSM 6008 / Z-2901).